A 299-amino-acid chain; its full sequence is GTPase Era (299 aa).

Residues 2–170 (KTGFVALAGK…LDLIIENLPE (169 aa)) form the Era-type G domain. The interval 10-17 (GKPNVGKS) is G1. 10–17 (GKPNVGKS) contributes to the GTP binding site. The segment at 36 to 40 (QTTRN) is G2. The interval 57–60 (DTPG) is G3. GTP contacts are provided by residues 57-61 (DTPGI) and 119-122 (NKID). A G4 region spans residues 119–122 (NKID). Residues 149-151 (TSA) form a G5 region. The KH type-2 domain occupies 201–278 (TYEEIPHSVA…FLDLHVKVKR (78 aa)).

Belongs to the TRAFAC class TrmE-Era-EngA-EngB-Septin-like GTPase superfamily. Era GTPase family. Monomer.

It localises to the cytoplasm. Its subcellular location is the cell inner membrane. In terms of biological role, an essential GTPase that binds both GDP and GTP, with rapid nucleotide exchange. Plays a role in 16S rRNA processing and 30S ribosomal subunit biogenesis and possibly also in cell cycle regulation and energy metabolism. The protein is GTPase Era of Thermosipho melanesiensis (strain DSM 12029 / CIP 104789 / BI429).